The following is a 619-amino-acid chain: MPQYRSRTTTYGRNMAGARALWRATGMKDEDFEKPIIAVANSFTQFVPGHVHLKDLGQLVAREIERAGGVAKEFNTIAVDDGIAMGHGGMLYSLPSRDLIADSVEYMVNAHCADALVCISNCDKITPGMLMAALRLNIPAVFVSGGPMEAGKVILNGEERHLDLVDAMVVAADDRESDEDVATIERSACPTCGSCSGMFTANSMNCLTEALGLSLPGNGSLLATHGDRKELFLEAGRLAVKLAKQYYEQDDESVLPRSIASFKAFENAICLDIAMGGSTNTVLHLLAAAHEAGVDFTMKDIDRLSRKIPNLCKVAPSTQKYHMEDVHRAGGVIAILGELDRAGLLHREVPTVHSPSLGAALDQWDINRETATEEAKSRYLAAPGGVPTQEAFSQSKRWTALDLDRENGCIRDIEHAYSQDGGLAVLYGNLAEQGCIVKTAGVDENILVFSGPAVVCESQDEAVNWILNGRVKEGDVVLIRYEGPRGGPGMQEMLYPTSYLKSKGLGKACALITDGRFSGGTSGLSIGHVSPEAAEGGLIALVEQGDRIEIDIPNRRIHLAVSEEELAHRRAAMEARGDQAWTPKDRDRPISQALQAYAAMTTSAARGGVRDLSQILGSR.

Mg(2+) is bound at residue aspartate 81. Residue cysteine 122 coordinates [2Fe-2S] cluster. Residues aspartate 123 and lysine 124 each coordinate Mg(2+). Position 124 is an N6-carboxylysine (lysine 124). Cysteine 195 is a [2Fe-2S] cluster binding site. Glutamate 492 contacts Mg(2+). Residue serine 518 is the Proton acceptor of the active site.

Belongs to the IlvD/Edd family. In terms of assembly, homodimer. [2Fe-2S] cluster serves as cofactor. The cofactor is Mg(2+).

The catalysed reaction is (2R)-2,3-dihydroxy-3-methylbutanoate = 3-methyl-2-oxobutanoate + H2O. It carries out the reaction (2R,3R)-2,3-dihydroxy-3-methylpentanoate = (S)-3-methyl-2-oxopentanoate + H2O. It functions in the pathway amino-acid biosynthesis; L-isoleucine biosynthesis; L-isoleucine from 2-oxobutanoate: step 3/4. Its pathway is amino-acid biosynthesis; L-valine biosynthesis; L-valine from pyruvate: step 3/4. Functionally, functions in the biosynthesis of branched-chain amino acids. Catalyzes the dehydration of (2R,3R)-2,3-dihydroxy-3-methylpentanoate (2,3-dihydroxy-3-methylvalerate) into 2-oxo-3-methylpentanoate (2-oxo-3-methylvalerate) and of (2R)-2,3-dihydroxy-3-methylbutanoate (2,3-dihydroxyisovalerate) into 2-oxo-3-methylbutanoate (2-oxoisovalerate), the penultimate precursor to L-isoleucine and L-valine, respectively. This Synechococcus elongatus (strain ATCC 33912 / PCC 7942 / FACHB-805) (Anacystis nidulans R2) protein is Dihydroxy-acid dehydratase.